Here is a 275-residue protein sequence, read N- to C-terminus: Diaminopimelate epimerase (275 aa).

3 residues coordinate substrate: Asn12, Gln45, and Asn65. Cys74 acts as the Proton donor in catalysis. Residues 75–76 (GN), Asn158, Asn191, and 209–210 (ER) contribute to the substrate site. The Proton acceptor role is filled by Cys218. 219–220 (GT) is a substrate binding site.

This sequence belongs to the diaminopimelate epimerase family. Homodimer.

It localises to the cytoplasm. The enzyme catalyses (2S,6S)-2,6-diaminopimelate = meso-2,6-diaminopimelate. It participates in amino-acid biosynthesis; L-lysine biosynthesis via DAP pathway; DL-2,6-diaminopimelate from LL-2,6-diaminopimelate: step 1/1. In terms of biological role, catalyzes the stereoinversion of LL-2,6-diaminopimelate (L,L-DAP) to meso-diaminopimelate (meso-DAP), a precursor of L-lysine and an essential component of the bacterial peptidoglycan. The chain is Diaminopimelate epimerase from Shewanella sp. (strain MR-4).